Consider the following 332-residue polypeptide: Twinfilin-1 (332 aa).

Positions 5-132 (SGIVAEQALL…VDLKNFDSAR (128 aa)) constitute an ADF-H 1 domain. Residues Ser-167 and Ser-172 each carry the phosphoserine modification. Residues 173-300 (PLSLTFRVNS…DKSLLMATNK (128 aa)) form the ADF-H 2 domain. The segment at 301–332 (EDSLDHGSNPDLPNKSNLKFNKPKGPLRKRRT) is disordered. Residues 321–332 (NKPKGPLRKRRT) are compositionally biased toward basic residues.

This sequence belongs to the actin-binding proteins ADF family. Twinfilin subfamily. As to quaternary structure, interacts with G-actin; ADP-actin form.

It is found in the cytoplasm. The protein localises to the cytoskeleton. Actin-binding protein involved in motile and morphological processes. Inhibits actin polymerization, likely by sequestering G-actin. Prevents actin filament assembly by forming a 1:1 complex with actin monomers, and inhibits the nucleotide exchange reaction of actin monomers. The protein is Twinfilin-1 (TWF1) of Saccharomyces cerevisiae (strain ATCC 204508 / S288c) (Baker's yeast).